We begin with the raw amino-acid sequence, 350 residues long: Dihydroorotase (350 aa).

Positions 17 and 19 each coordinate Zn(2+). Residues H19 to R21 and N45 each bind substrate. Zn(2+)-binding residues include K103, H140, and H178. An N6-carboxylysine modification is found at K103. Substrate is bound at residue H140. L223 serves as a coordination point for substrate. D251 provides a ligand contact to Zn(2+). D251 is a catalytic residue. H255 and A267 together coordinate substrate.

It belongs to the metallo-dependent hydrolases superfamily. DHOase family. Class II DHOase subfamily. As to quaternary structure, homodimer. The cofactor is Zn(2+).

The catalysed reaction is (S)-dihydroorotate + H2O = N-carbamoyl-L-aspartate + H(+). It functions in the pathway pyrimidine metabolism; UMP biosynthesis via de novo pathway; (S)-dihydroorotate from bicarbonate: step 3/3. Functionally, catalyzes the reversible cyclization of carbamoyl aspartate to dihydroorotate. The sequence is that of Dihydroorotase from Photorhabdus laumondii subsp. laumondii (strain DSM 15139 / CIP 105565 / TT01) (Photorhabdus luminescens subsp. laumondii).